The chain runs to 241 residues: Orotidine 5'-phosphate decarboxylase (241 aa).

Substrate is bound by residues D16, K37, 64 to 73, T128, R190, Q199, G219, and R220; that span reads DLKFHDIPTT. The Proton donor role is filled by K66.

Belongs to the OMP decarboxylase family. Type 1 subfamily. As to quaternary structure, homodimer.

It carries out the reaction orotidine 5'-phosphate + H(+) = UMP + CO2. Its pathway is pyrimidine metabolism; UMP biosynthesis via de novo pathway; UMP from orotate: step 2/2. In terms of biological role, catalyzes the decarboxylation of orotidine 5'-monophosphate (OMP) to uridine 5'-monophosphate (UMP). The protein is Orotidine 5'-phosphate decarboxylase of Prochlorococcus marinus (strain NATL2A).